The primary structure comprises 160 residues: Nucleotide-binding protein VS_1405 (160 aa).

The protein belongs to the YajQ family.

In terms of biological role, nucleotide-binding protein. In Vibrio atlanticus (strain LGP32) (Vibrio splendidus (strain Mel32)), this protein is Nucleotide-binding protein VS_1405.